The primary structure comprises 236 residues: Small ribosomal subunit protein uS2c (236 aa).

This sequence belongs to the universal ribosomal protein uS2 family.

It is found in the plastid. The protein localises to the chloroplast. This chain is Small ribosomal subunit protein uS2c (rps2), found in Oryza sativa (Rice).